Here is a 362-residue protein sequence, read N- to C-terminus: Zinc transporter 9 (362 aa).

Positions 1-21 (MAFDLKLTACLLLAVFSLAAA) are cleaved as a signal peptide. Topologically, residues 22 to 42 (ADCECQPSDEGHDAAKSRTLK) are extracellular. A helical membrane pass occupies residues 43–63 (VIAIFCILVGSSAGCAIPSLG). Topologically, residues 64–74 (RRFPALRPDTS) are cytoplasmic. A helical transmembrane segment spans residues 75 to 95 (LFFALKAFAAGVILATAFVHI). Topologically, residues 96–120 (LPVSFDKLGSPCLVDGPWRKYPFTG) are extracellular. Residues 121–141 (LVAMLAAVATLLLDTIATGYF) form a helical membrane-spanning segment. Topologically, residues 142–207 (LQRAQDSRGA…EDRAKLVRHR (66 aa)) are cytoplasmic. The chain crosses the membrane as a helical span at residues 208–228 (VISQVFELGIIVHSIIIGISL). Residues 229–239 (GASESPSTIRP) are Extracellular-facing. Residues 240–260 (LVAALTFHQFFEGIGLGGCIV) form a helical membrane-spanning segment. The Cytoplasmic segment spans residues 261 to 269 (QARFHLKSA). A helical membrane pass occupies residues 270-290 (VTMAIFFSLTTPVGIMIGIGI). Residues 291–301 (SSAYNENSPTA) are Extracellular-facing. A helical membrane pass occupies residues 302–322 (LIVEGILDAAAAGILNYMALV). The Cytoplasmic portion of the chain corresponds to 323 to 341 (DLLAEDFMNPRVRKSGRLQ). The chain crosses the membrane as a helical span at residues 342 to 362 (LIISILLLVGIALMSLLGIWA).

This sequence belongs to the ZIP transporter (TC 2.A.5) family.

It localises to the cell membrane. In terms of biological role, zinc transporter that may be involved in zinc uptake from the rhizosphere. This is Zinc transporter 9 (ZIP9) from Oryza sativa subsp. japonica (Rice).